Here is a 193-residue protein sequence, read N- to C-terminus: GTP cyclohydrolase 1 (193 aa).

3 residues coordinate Zn(2+): cysteine 83, histidine 86, and cysteine 154.

The protein belongs to the GTP cyclohydrolase I family. In terms of assembly, homomer.

It catalyses the reaction GTP + H2O = 7,8-dihydroneopterin 3'-triphosphate + formate + H(+). Its pathway is cofactor biosynthesis; 7,8-dihydroneopterin triphosphate biosynthesis; 7,8-dihydroneopterin triphosphate from GTP: step 1/1. The protein is GTP cyclohydrolase 1 of Porphyromonas gingivalis (strain ATCC 33277 / DSM 20709 / CIP 103683 / JCM 12257 / NCTC 11834 / 2561).